The chain runs to 158 residues: Ribosome maturation factor RimP (158 aa).

Belongs to the RimP family.

It localises to the cytoplasm. Required for maturation of 30S ribosomal subunits. This Streptococcus suis (strain 98HAH33) protein is Ribosome maturation factor RimP.